Reading from the N-terminus, the 503-residue chain is ATP synthase subunit alpha (503 aa).

Residue 170-177 participates in ATP binding; that stretch reads GDRQTGKT.

F-type ATPases have 2 components, CF(1) - the catalytic core - and CF(0) - the membrane proton channel. CF(1) has five subunits: alpha(3), beta(3), gamma(1), delta(1), epsilon(1). CF(0) has four main subunits: a(1), b(1), b'(1) and c(9-12).

Its subcellular location is the cellular thylakoid membrane. It carries out the reaction ATP + H2O + 4 H(+)(in) = ADP + phosphate + 5 H(+)(out). Its activity is regulated as follows. Inhibited by dicyclohexylcarbodiimide. In terms of biological role, produces ATP from ADP in the presence of a proton gradient across the membrane. The alpha chain is a regulatory subunit. The complex from the organism is particularly stable to disruption and remains functional after 6 hrs at 55 degrees Celsius. This chain is ATP synthase subunit alpha, found in Thermosynechococcus vestitus (strain NIES-2133 / IAM M-273 / BP-1).